The sequence spans 150 residues: D-aminoacyl-tRNA deacylase (150 aa).

Positions 137-138 (GP) match the Gly-cisPro motif, important for rejection of L-amino acids motif.

This sequence belongs to the DTD family. Homodimer.

Its subcellular location is the cytoplasm. The catalysed reaction is glycyl-tRNA(Ala) + H2O = tRNA(Ala) + glycine + H(+). It carries out the reaction a D-aminoacyl-tRNA + H2O = a tRNA + a D-alpha-amino acid + H(+). An aminoacyl-tRNA editing enzyme that deacylates mischarged D-aminoacyl-tRNAs. Also deacylates mischarged glycyl-tRNA(Ala), protecting cells against glycine mischarging by AlaRS. Acts via tRNA-based rather than protein-based catalysis; rejects L-amino acids rather than detecting D-amino acids in the active site. By recycling D-aminoacyl-tRNA to D-amino acids and free tRNA molecules, this enzyme counteracts the toxicity associated with the formation of D-aminoacyl-tRNA entities in vivo and helps enforce protein L-homochirality. In Listeria monocytogenes serotype 4b (strain CLIP80459), this protein is D-aminoacyl-tRNA deacylase.